Reading from the N-terminus, the 439-residue chain is Tol-Pal system protein TolB (439 aa).

Residues 1–22 form the signal peptide; sequence MKKPLRWLAALTVLLLPLSALA.

It belongs to the TolB family. As to quaternary structure, the Tol-Pal system is composed of five core proteins: the inner membrane proteins TolA, TolQ and TolR, the periplasmic protein TolB and the outer membrane protein Pal. They form a network linking the inner and outer membranes and the peptidoglycan layer.

The protein localises to the periplasm. In terms of biological role, part of the Tol-Pal system, which plays a role in outer membrane invagination during cell division and is important for maintaining outer membrane integrity. The polypeptide is Tol-Pal system protein TolB (Xanthomonas oryzae pv. oryzae (strain KACC10331 / KXO85)).